A 145-amino-acid polypeptide reads, in one-letter code: Transcription antitermination protein NusB (145 aa).

This sequence belongs to the NusB family.

In terms of biological role, involved in transcription antitermination. Required for transcription of ribosomal RNA (rRNA) genes. Binds specifically to the boxA antiterminator sequence of the ribosomal RNA (rrn) operons. The polypeptide is Transcription antitermination protein NusB (Acidothermus cellulolyticus (strain ATCC 43068 / DSM 8971 / 11B)).